The primary structure comprises 253 residues: Small ribosomal subunit protein uS3 (253 aa).

The 69-residue stretch at 38 to 106 (IRKYIHARLS…EVQINIFEIK (69 aa)) folds into the KH type-2 domain. The tract at residues 216–253 (AGMDKKQAGQGGGKGGDSPRGDRKPFNKGGKPDARKRK) is disordered. Over residues 232 to 253 (DSPRGDRKPFNKGGKPDARKRK) the composition is skewed to basic and acidic residues.

Belongs to the universal ribosomal protein uS3 family. As to quaternary structure, part of the 30S ribosomal subunit. Forms a tight complex with proteins S10 and S14.

Binds the lower part of the 30S subunit head. Binds mRNA in the 70S ribosome, positioning it for translation. The sequence is that of Small ribosomal subunit protein uS3 from Flavobacterium psychrophilum (strain ATCC 49511 / DSM 21280 / CIP 103535 / JIP02/86).